The chain runs to 472 residues: Cannabinoid receptor 1 (472 aa).

At 1–116 (MKSILDGLAD…CFMILNPSQQ (116 aa)) the chain is on the extracellular side. Residues 2–23 (KSILDGLADTTFRTITTDLLYV) form a required for mitochondrial localization region. N-linked (GlcNAc...) asparagine glycosylation is found at N77 and N83. A helical membrane pass occupies residues 117 to 142 (LAIAVLSLTLGTFTVLENLLVLCVIL). Residues 143-154 (HSRSLRCRPSYH) are Cytoplasmic-facing. The chain crosses the membrane as a helical span at residues 155–175 (FIGSLAVADLLGSVIFVYSFV). The Extracellular segment spans residues 176–187 (DFHVFHRKDSPN). Residues 188–212 (VFLFKLGGVTASFTASVGSLFLTAI) form a helical membrane-spanning segment. Residues 213 to 232 (DRYISIHRPLAYKKIVTRPK) lie on the Cytoplasmic side of the membrane. The chain crosses the membrane as a helical span at residues 233 to 255 (AVVAFCLMWTIAIVIAVLPLLGW). Topologically, residues 256-273 (NCKKLQSVCSDIFPLIDE) are extracellular. A helical membrane pass occupies residues 274 to 299 (TYLMFWIGVTSVLLLFIVYAYMYILW). At 300–344 (KAHIHAVRMIQRGTQKSIIIHTSEDGKVQVTRPDQARMDIRLAKT) the chain is on the cytoplasmic side. A helical transmembrane segment spans residues 345–365 (LVLILVVLIICWGPLLAIMVY). Over 366-377 (DVFGKMNKLIKT) the chain is Extracellular. Residues 378–399 (VFAFCSMLCLLNSTVNPIIYAL) form a helical membrane-spanning segment. At 400–472 (RSKDLRHAFR…VSTNTSAKAL (73 aa)) the chain is on the cytoplasmic side. C415 carries the S-palmitoyl cysteine lipid modification. S425 and S429 each carry phosphoserine.

This sequence belongs to the G-protein coupled receptor 1 family. As to quaternary structure, interacts (via C-terminus) with CNRIP1; this interaction attenuates constitutive, but not agonist-dependent, inhibition of voltage-gated Ca(2+) channels in neurons. Associates with G protein alpha subunits, including G(i) alpha-1/GNAI1, G(i) alpha-3/GNAI3 and G(o)-alpha/GNAO1; palmitoylation is important for interaction with GNAI3 and GNAO1. Post-translationally, palmitoylation at Cys-415 is important for recruitment at plasma membrane and lipid rafts and association with G protein alpha subunits. Expressed in cerebral arterial muscle cells and cerebral cortex (at protein level).

Its subcellular location is the cell membrane. The protein localises to the membrane raft. It is found in the mitochondrion outer membrane. The protein resides in the cell projection. It localises to the axon. Its subcellular location is the presynapse. Hemopressin, a peptide derived from hemoglobin subunit alpha (HBA1 and/or HBA2), acts as an antagonist peptide: hemopressin-binding efficiently blocks cannabinoid receptor CNR1 and subsequent signaling. Functionally, G-protein coupled receptor for endogenous cannabinoids (eCBs), including N-arachidonoylethanolamide (also called anandamide or AEA) and 2-arachidonoylglycerol (2-AG), as well as phytocannabinoids, such as delta(9)-tetrahydrocannabinol (THC). Mediates many cannabinoid-induced effects, acting, among others, on food intake, memory loss, gastrointestinal motility, catalepsy, ambulatory activity, anxiety, chronic pain. Signaling typically involves reduction in cyclic AMP. In the hypothalamus, may have a dual effect on mitochondrial respiration depending upon the agonist dose and possibly upon the cell type. Increases respiration at low doses, while decreases respiration at high doses. At high doses, CNR1 signal transduction involves G-protein alpha-i protein activation and subsequent inhibition of mitochondrial soluble adenylate cyclase, decrease in cyclic AMP concentration, inhibition of protein kinase A (PKA)-dependent phosphorylation of specific subunits of the mitochondrial electron transport system, including NDUFS2. In the hypothalamus, inhibits leptin-induced reactive oxygen species (ROS) formation and mediates cannabinoid-induced increase in SREBF1 and FASN gene expression. In response to cannabinoids, drives the release of orexigenic beta-endorphin, not that of melanocyte-stimulating hormone alpha/alpha-MSH, from hypothalamic POMC neurons, hence promoting food intake. In the hippocampus, regulates cellular respiration and energy production in response to cannabinoids. Involved in cannabinoid-dependent depolarization-induced suppression of inhibition (DSI), a process in which depolarization of CA1 postsynaptic pyramidal neurons mobilizes eCBs, which retrogradely activate presynaptic CB1 receptors, transiently decreasing GABAergic inhibitory neurotransmission. Also reduces excitatory synaptic transmission. In superior cervical ganglions and cerebral vascular smooth muscle cells, inhibits voltage-gated Ca(2+) channels in a constitutive, as well as agonist-dependent manner. In cerebral vascular smooth muscle cells, inhibition of voltage-gated Ca(2+) channels leads to vasodilation and decrease in vascular tone. Induces leptin production in adipocytes and reduces LRP2-mediated leptin clearance in the kidney, hence participating in hyperleptinemia. In adipose tissue, CNR1 signaling leads to increased expression of SREBF1, ACACA and FASN genes. In the liver, activation by endocannabinoids leads to increased de novo lipogenesis and reduced fatty acid catabolism, associated with increased expression of SREBF1/SREBP-1, GCK, ACACA, ACACB and FASN genes. May also affect de novo cholesterol synthesis and HDL-cholesteryl ether uptake. Peripherally modulates energy metabolism. In high carbohydrate diet-induced obesity, may decrease the expression of mitochondrial dihydrolipoyl dehydrogenase/DLD in striated muscles, as well as that of selected glucose/ pyruvate metabolic enzymes, hence affecting energy expenditure through mitochondrial metabolism. In response to cannabinoid anandamide, elicits a pro-inflammatory response in macrophages, which involves NLRP3 inflammasome activation and IL1B and IL18 secretion. In macrophages infiltrating pancreatic islets, this process may participate in the progression of type-2 diabetes and associated loss of pancreatic beta-cells. This chain is Cannabinoid receptor 1 (CNR1), found in Felis catus (Cat).